A 379-amino-acid chain; its full sequence is Inositol 3-kinase (379 aa).

Residues Ser-217, 267 to 270, and Asn-294 contribute to the ATP site; that span reads GAGD. Catalysis depends on Asp-270, which acts as the Proton acceptor.

The protein belongs to the carbohydrate kinase pfkB family.

It carries out the reaction myo-inositol + ATP = 1D-myo-inositol 3-phosphate + ADP + H(+). In terms of biological role, kinase that phosphorylates myo-inositol to produce multiple myo-inositol monophosphates, Ins(1)P, Ins(3)P, Ins(4)P, Ins(5)P and Ins(6)P. Participates in phytic acid biosynthesis in developing seeds. Phytic acid is the primary storage form of phosphorus in cereal grains and other plant seeds. The chain is Inositol 3-kinase from Zea mays (Maize).